A 223-amino-acid chain; its full sequence is 3,4-dihydroxy-2-butanone 4-phosphate synthase (223 aa).

D-ribulose 5-phosphate-binding positions include 39-40, aspartate 44, 152-156, and glutamate 176; these read RE and RRGHT. Residue glutamate 40 coordinates Mg(2+). Residue histidine 155 participates in Mg(2+) binding.

The protein belongs to the DHBP synthase family. Homodimer. Requires Mg(2+) as cofactor. It depends on Mn(2+) as a cofactor.

It carries out the reaction D-ribulose 5-phosphate = (2S)-2-hydroxy-3-oxobutyl phosphate + formate + H(+). The protein operates within cofactor biosynthesis; riboflavin biosynthesis; 2-hydroxy-3-oxobutyl phosphate from D-ribulose 5-phosphate: step 1/1. In terms of biological role, catalyzes the conversion of D-ribulose 5-phosphate to formate and 3,4-dihydroxy-2-butanone 4-phosphate. The polypeptide is 3,4-dihydroxy-2-butanone 4-phosphate synthase (Desulfovibrio desulfuricans (strain ATCC 27774 / DSM 6949 / MB)).